We begin with the raw amino-acid sequence, 332 residues long: 3'(2'),5'-bisphosphate nucleotidase (332 aa).

The active-site Proton acceptor is D49. 4 residues coordinate Mg(2+): E73, D129, I131, and D132. T134 functions as the Proton acceptor in the catalytic mechanism. Adenosine 3',5'-bisphosphate contacts are provided by T134, S245, K248, R262, and D274. 4 residues coordinate AMP: S245, K248, R262, and D274. D274 lines the Mg(2+) pocket.

The protein belongs to the inositol monophosphatase superfamily. It depends on Mg(2+) as a cofactor.

It catalyses the reaction 3'-phosphoadenylyl sulfate + H2O = adenosine 5'-phosphosulfate + phosphate. The enzyme catalyses adenosine 3',5'-bisphosphate + H2O = AMP + phosphate. The catalysed reaction is adenosine 2',5'-bisphosphate + H2O = AMP + phosphate. It carries out the reaction 1D-myo-inositol 1,4-bisphosphate + H2O = 1D-myo-inositol 4-phosphate + phosphate. It catalyses the reaction 1D-myo-inositol 1,3,4-trisphosphate + H2O = 1D-myo-inositol 3,4-bisphosphate + phosphate. In terms of biological role, phosphatase that converts adenosine 3'-phosphate 5'-phosphosulfate (PAPS) to adenosine 5'-phosphosulfate (APS) and 3'(2')-phosphoadenosine 5'-phosphate (PAP) to AMP. Is also able to hydrolyze inositol 1,4-bisphosphate and inositol 1,3,4-trisphosphate. In Dictyostelium discoideum (Social amoeba), this protein is 3'(2'),5'-bisphosphate nucleotidase.